A 154-amino-acid chain; its full sequence is 6,7-dimethyl-8-ribityllumazine synthase (154 aa).

5-amino-6-(D-ribitylamino)uracil is bound by residues phenylalanine 22, 56-58 (AFE), and 81-83 (VLI). 86–87 (ET) lines the (2S)-2-hydroxy-3-oxobutyl phosphate pocket. The Proton donor role is filled by histidine 89. Leucine 114 is a binding site for 5-amino-6-(D-ribitylamino)uracil. Arginine 128 provides a ligand contact to (2S)-2-hydroxy-3-oxobutyl phosphate.

Belongs to the DMRL synthase family.

The enzyme catalyses (2S)-2-hydroxy-3-oxobutyl phosphate + 5-amino-6-(D-ribitylamino)uracil = 6,7-dimethyl-8-(1-D-ribityl)lumazine + phosphate + 2 H2O + H(+). It participates in cofactor biosynthesis; riboflavin biosynthesis; riboflavin from 2-hydroxy-3-oxobutyl phosphate and 5-amino-6-(D-ribitylamino)uracil: step 1/2. Catalyzes the formation of 6,7-dimethyl-8-ribityllumazine by condensation of 5-amino-6-(D-ribitylamino)uracil with 3,4-dihydroxy-2-butanone 4-phosphate. This is the penultimate step in the biosynthesis of riboflavin. This chain is 6,7-dimethyl-8-ribityllumazine synthase, found in Chlamydia pneumoniae (Chlamydophila pneumoniae).